The primary structure comprises 511 residues: Pentatricopeptide repeat-containing protein At5g08510 (511 aa).

PPR repeat units follow at residues 46–80, 81–115, 116–146, 147–181, 182–213, 214–248, 249–279, 281–315, 316–346, and 352–382; these read CTFLYNKLIQAYYVHHQPHESIVLYNLLSFDGLRP, SHHTFNFIFAASASFSSARPLRLLHSQFFRSGFES, DSFCCTTLITAYAKLGALCCARRVFDEMSKR, DVPVWNAMITGYQRRGDMKAAMELFDSMPRKNVTS, WTTVISGFSQNGNYSEALKMFLCMEKDKSVKP, NHITVVSVLPACANLGELEIGRRLEGYARENGFFD, NIYVCNATIEMYSKCGMIDVAKRLFEELGNQ, NLCSWNSMIGSLATHGKHDEALTLFAQMLREGEKP, DAVTFVGLLLACVHGGMVVKGQELFKSMEEV, and KLEHYGCMIDLLGRVGKLQEAYDLIKTMPMK. Positions 387–462 are type E motif; the sequence is VWGTLLGACS…AAGYSYFVEV (76 aa). Residues 463 to 494 form a type E(+) motif region; the sequence is GVDVHKFTVEDKSHPRSYEIYQVLEEIFRRMK.

Belongs to the PPR family. PCMP-E subfamily.

This Arabidopsis thaliana (Mouse-ear cress) protein is Pentatricopeptide repeat-containing protein At5g08510 (PCMP-E20).